The following is a 172-amino-acid chain: uncharacterized protein (172 aa).

Belongs to the flavoredoxin family. FMN serves as cofactor.

This is an uncharacterized protein from Pyrococcus abyssi (strain GE5 / Orsay).